The sequence spans 436 residues: Cysteine--tRNA ligase (436 aa).

Zn(2+) is bound at residue Cys-24. Positions 26-36 (PTVYNHIHIGN) match the 'HIGH' region motif. Zn(2+) is bound by residues Cys-202, His-227, and Glu-231. A 'KMSKS' region motif is present at residues 259–263 (KMSKS). ATP is bound at residue Lys-262.

This sequence belongs to the class-I aminoacyl-tRNA synthetase family. As to quaternary structure, monomer. Zn(2+) serves as cofactor.

Its subcellular location is the cytoplasm. The enzyme catalyses tRNA(Cys) + L-cysteine + ATP = L-cysteinyl-tRNA(Cys) + AMP + diphosphate. In Ureaplasma parvum serovar 3 (strain ATCC 700970), this protein is Cysteine--tRNA ligase.